A 334-amino-acid chain; its full sequence is Catabolite repressor/activator (334 aa).

Residues 1–58 enclose the HTH lacI-type domain; the sequence is MKLDEIARLAGVSRTTASYVINGKAKQYRVSDKTVEKVMAVVREHNYHPNAVAAGLRA. A DNA-binding region (H-T-H motif) is located at residues 3–22; sequence LDEIARLAGVSRTTASYVIN.

In terms of assembly, homotetramer.

Global transcriptional regulator, which plays an important role in the regulation of carbon metabolism. The polypeptide is Catabolite repressor/activator (cra) (Escherichia coli O157:H7).